Consider the following 78-residue polypeptide: Large ribosomal subunit protein bL28 (78 aa).

Positions 1–20 are disordered; it reads MSRVCQVTGKRPVTGNNRSH.

Belongs to the bacterial ribosomal protein bL28 family.

This chain is Large ribosomal subunit protein bL28, found in Photobacterium profundum (strain SS9).